A 103-amino-acid chain; its full sequence is Small ribosomal subunit protein uS10 (103 aa).

Belongs to the universal ribosomal protein uS10 family. Part of the 30S ribosomal subunit.

Functionally, involved in the binding of tRNA to the ribosomes. The sequence is that of Small ribosomal subunit protein uS10 from Psychromonas ingrahamii (strain DSM 17664 / CCUG 51855 / 37).